A 419-amino-acid chain; its full sequence is Histidine--tRNA ligase (419 aa).

Belongs to the class-II aminoacyl-tRNA synthetase family.

The protein resides in the cytoplasm. It catalyses the reaction tRNA(His) + L-histidine + ATP = L-histidyl-tRNA(His) + AMP + diphosphate + H(+). The protein is Histidine--tRNA ligase of Pyrobaculum arsenaticum (strain DSM 13514 / JCM 11321 / PZ6).